The chain runs to 177 residues: 18.9 kDa heat shock protein (177 aa).

The disordered stretch occupies residues 1 to 35 (MSMITSMLGRKQNAQQKGGGGGGRTGGGGGGEIEP). Residues 17–32 (KGGGGGGRTGGGGGGE) are compositionally biased toward gly residues. The region spanning 63-177 (AAGVPSTASM…PHARIIPITN (115 aa)) is the sHSP domain.

The protein belongs to the small heat shock protein (HSP20) family. May form oligomeric structures.

It is found in the cytoplasm. The protein is 18.9 kDa heat shock protein (HSP18.9) of Oryza sativa subsp. japonica (Rice).